Reading from the N-terminus, the 609-residue chain is Threonine--tRNA ligase (609 aa).

The interval 1-143 (MRVLYLHTER…SFKPGDSRAE (143 aa)) is editing domain. Catalytic stretches follow at residues 195 to 491 (PRYL…PRLP) and 196 to 491 (RYLE…PRLP). Zn(2+)-binding residues include C288, H339, and H460.

This sequence belongs to the class-II aminoacyl-tRNA synthetase family. Homodimer. Zn(2+) is required as a cofactor.

It localises to the cytoplasm. The catalysed reaction is tRNA(Thr) + L-threonine + ATP = L-threonyl-tRNA(Thr) + AMP + diphosphate + H(+). Functionally, catalyzes the attachment of threonine to tRNA(Thr) in a two-step reaction: L-threonine is first activated by ATP to form Thr-AMP and then transferred to the acceptor end of tRNA(Thr). Also edits incorrectly charged L-seryl-tRNA(Thr). In Pyrobaculum neutrophilum (strain DSM 2338 / JCM 9278 / NBRC 100436 / V24Sta) (Thermoproteus neutrophilus), this protein is Threonine--tRNA ligase.